We begin with the raw amino-acid sequence, 261 residues long: MDIVSHQKIRRFEAGTFQEIESSVATEYPLTIYVNDQELVTIVCTPEYLEDLVVGFLTSEGIVRGPQDIDSVDIIEATGHAKVSANFVNKFNAKYRGKRYITSCCGKSRENFYFQSDASLVNVKQNGSLQLTTDMIFRLMENFEQNSATFHQTGGVHNAALCSSAEIIYSRMDIGRHNALDKIYGRALQDGTSTEDKAIIFSGRISSEILVKTAKLGCGIILSRSAPTELAINMAEELNITTVGFIRGDRLNVYSGFERIT.

The Cysteine persulfide intermediate role is filled by C105. A Mo-bis(molybdopterin guanine dinucleotide)-binding site is contributed by 245–250; the sequence is FIRGDR.

This sequence belongs to the FdhD family.

It localises to the cytoplasm. Functionally, required for formate dehydrogenase (FDH) activity. Acts as a sulfur carrier protein that transfers sulfur from IscS to the molybdenum cofactor prior to its insertion into FDH. This chain is Sulfur carrier protein FdhD, found in Listeria monocytogenes serotype 4b (strain F2365).